The sequence spans 249 residues: Segregation and condensation protein A (249 aa).

It belongs to the ScpA family. In terms of assembly, component of a cohesin-like complex composed of ScpA, ScpB and the Smc homodimer, in which ScpA and ScpB bind to the head domain of Smc. The presence of the three proteins is required for the association of the complex with DNA.

The protein resides in the cytoplasm. In terms of biological role, participates in chromosomal partition during cell division. May act via the formation of a condensin-like complex containing Smc and ScpB that pull DNA away from mid-cell into both cell halves. This chain is Segregation and condensation protein A, found in Listeria welshimeri serovar 6b (strain ATCC 35897 / DSM 20650 / CCUG 15529 / CIP 8149 / NCTC 11857 / SLCC 5334 / V8).